Reading from the N-terminus, the 332-residue chain is Arabinogalactan endo-beta-1,4-galactanase (332 aa).

Residue Asn-111 is glycosylated (N-linked (GlcNAc...) asparagine). Glu-135 acts as the Proton donor in catalysis. Glu-245 acts as the Nucleophile in catalysis.

This sequence belongs to the glycosyl hydrolase 53 family.

The catalysed reaction is The enzyme specifically hydrolyzes (1-&gt;4)-beta-D-galactosidic linkages in type I arabinogalactans.. The chain is Arabinogalactan endo-beta-1,4-galactanase from Thermothelomyces thermophilus (Myceliophthora thermophila).